We begin with the raw amino-acid sequence, 479 residues long: BRAP2 RING ZnF UBP domain-containing protein 2 (479 aa).

The segment at 167-207 (CPVCLERLDQDTGGILTTMCNHSFHCSCISNWPDSSCPVCR) adopts an RING-type; atypical zinc-finger fold. The UBP-type; degenerate zinc finger occupies 201–294 (SSCPVCRYCQ…GKLVELNSHG (94 aa)). Residues C218, C221, C230, C233, C238, H245, H249, and H255 each coordinate Zn(2+). Positions 328–442 (NELLQAQLEN…MAQMDGESEV (115 aa)) form a coiled coil. The segment at 434-479 (AQMDGESEVSETKEVQDATVSTTNTSSSGAGNVIHANKKKSNRRKG) is disordered. The segment covering 451–466 (ATVSTTNTSSSGAGNV) has biased composition (low complexity). Residues 469 to 479 (ANKKKSNRRKG) are compositionally biased toward basic residues.

As to quaternary structure, component of the heteromeric E3 ligase complex made of BRIZ1 and BRIZ2. Forms heterooligomers with BRIZ1 via coiled-coil domains.

The enzyme catalyses S-ubiquitinyl-[E2 ubiquitin-conjugating enzyme]-L-cysteine + [acceptor protein]-L-lysine = [E2 ubiquitin-conjugating enzyme]-L-cysteine + N(6)-ubiquitinyl-[acceptor protein]-L-lysine.. The protein operates within protein modification; protein ubiquitination. RING-type ubiquitin E3 ligase that binds ubiquitin and is required for seed germination and post-germination growth. This chain is BRAP2 RING ZnF UBP domain-containing protein 2, found in Arabidopsis thaliana (Mouse-ear cress).